Consider the following 132-residue polypeptide: UPF0292 protein PH1700 (132 aa).

The Toprim domain maps to 20 to 100; the sequence is EGAIIVEGAR…KVDTETRREL (81 aa). Mg(2+) contacts are provided by glutamate 26, aspartate 69, and aspartate 71.

This sequence belongs to the UPF0292 family. Requires Mg(2+) as cofactor.

This chain is UPF0292 protein PH1700, found in Pyrococcus horikoshii (strain ATCC 700860 / DSM 12428 / JCM 9974 / NBRC 100139 / OT-3).